The chain runs to 363 residues: LIM and cysteine-rich domains protein 1 (363 aa).

Position 16 is a phosphoserine (Ser-16). The 108-residue stretch at 99 to 206 folds into the PET domain; it reads MIMTNPIATG…GEVALPGQGG (108 aa). The disordered stretch occupies residues 200 to 234; it reads ALPGQGGLPKEEGKQQEKPEGAETAPPTTNGSIGD. The span at 208–220 shows a compositional bias: basic and acidic residues; that stretch reads PKEEGKQQEKPEG. LIM zinc-binding domains lie at 239–304 and 305–363; these read YVCE…SLRP and RCSG…SKRS.

As to quaternary structure, interacts with beta-dystroglycan. Interacts with GATA1, GATA4 and GATA6.

It is found in the cytoplasm. The protein localises to the nucleus. In terms of biological role, transcriptional cofactor that restricts GATA6 function by inhibiting DNA-binding, resulting in repression of GATA6 transcriptional activation of downstream target genes. Represses GATA6-mediated trans activation of lung- and cardiac tissue-specific promoters. Inhibits DNA-binding by GATA4 and GATA1 to the cTNC promoter. Plays a critical role in the development of cardiac hypertrophy via activation of calcineurin/nuclear factor of activated T-cells signaling pathway. In Bos taurus (Bovine), this protein is LIM and cysteine-rich domains protein 1 (LMCD1).